A 292-amino-acid chain; its full sequence is uncharacterized protein (292 aa).

Active-site charge relay system residues include Thr43 and Tyr105. The active-site Proton donor is Tyr131. Lys159 (schiff-base intermediate with substrate) is an active-site residue.

This sequence belongs to the DapA family. As to quaternary structure, homotetramer.

It localises to the cytoplasm. This is an uncharacterized protein from Thermococcus kodakarensis (strain ATCC BAA-918 / JCM 12380 / KOD1) (Pyrococcus kodakaraensis (strain KOD1)).